Reading from the N-terminus, the 370-residue chain is MAEERQDALREFVAVTGAEEDRARFFLESAGWDLQIALASFYEDGGDEDIVTISQATPSSVSRGTAPSDNRVTSFRDLIHDQDEEEEEEEGQRFYAGGSERSGQQIVGPPRKKSPNELVDDLFKGAKEHGAVAVERVTKSPGETSKPRPFAGGGYRLGAAPEEESAYVAGERRRHSGQDVHVVLKLWKTGFSLDNGDLRSYQDPSNAQFLESIRRGEVPAELRRLAHGGQVNLDMEDHRDEDFVKPKGAFKAFTGEGQKLGSTAPQVLNTSSPAQQAENEAKASSSILINEAEPTTNIQIRLADGGRLVQKFNHSHRISDIRLFIVDARPAMAATSFVLMTTFPNKELADENQTLKEANLLNAVIVQRLT.

Residues 54–73 (SQATPSSVSRGTAPSDNRVT) form a disordered region. Residues serine 74, serine 102, and serine 114 each carry the phosphoserine modification. Disordered stretches follow at residues 80–116 (HDQDEEEEEEEGQRFYAGGSERSGQQIVGPPRKKSPN) and 138–157 (TKSPGETSKPRPFAGGGYRL). Residues 109–115 (PPRKKSP) carry the Nuclear localization signal motif. The residue at position 140 (serine 140) is a Phosphoserine; by CDK1. Residue tyrosine 167 is modified to Phosphotyrosine. The short motif at 172–175 (RRRH) is the Nuclear localization signal element. Phosphoserine is present on residues serine 176, serine 192, and serine 272. Residues 179-244 (DVHVVLKLWK…MEDHRDEDFV (66 aa)) enclose the SEP domain. The region spanning 291–368 (EAEPTTNIQI…NLLNAVIVQR (78 aa)) is the UBX domain.

Belongs to the NSFL1C family. As to quaternary structure, part of a ternary complex containing STX5A, NSFL1C and VCP. NSFL1C forms a homotrimer that binds to one end of a VCP homohexamer. The complex binds to membranes enriched in phosphatidylethanolamine-containing lipids and promotes Golgi membrane fusion. Interaction with VCIP135 leads to dissociation of the complex via ATP hydrolysis by VCP. Binds ubiquitin and mono-ubiquitinated proteins via its N-terminal UBA-like domain when bound to VCP. In terms of processing, phosphorylated during mitosis. Phosphorylation inhibits interaction with Golgi membranes and is required for the fragmentation of the Golgi stacks during mitosis. As to expression, highly expressed in heart, brain, spleen, lung, liver, muscle, kidney and testis.

The protein localises to the nucleus. It localises to the golgi apparatus. Its subcellular location is the golgi stack. It is found in the chromosome. The protein resides in the cytoplasm. The protein localises to the cytoskeleton. It localises to the microtubule organizing center. Its subcellular location is the centrosome. Functionally, reduces the ATPase activity of VCP. Necessary for the fragmentation of Golgi stacks during mitosis and for VCP-mediated reassembly of Golgi stacks after mitosis. May play a role in VCP-mediated formation of transitional endoplasmic reticulum (tER). Inhibits the activity of CTSL (in vitro). Together with UBXN2B/p37, regulates the centrosomal levels of kinase AURKA/Aurora A during mitotic progression by promoting AURKA removal from centrosomes in prophase. Also, regulates spindle orientation during mitosis. The chain is NSFL1 cofactor p47 (Nsfl1c) from Rattus norvegicus (Rat).